The primary structure comprises 1309 residues: Angiotensin-converting enzyme (1309 aa).

A signal peptide spans 1-33 (MGAASGCRWPWPPLLPLLLMLLLPPPPLPVALA). Residues 34-1259 (LDSALQPGNF…GLNLEEQQAR (1226 aa)) are Extracellular-facing. N42, N58, N78, N115, N135, N150, and N164 each carry an N-linked (GlcNAc...) asparagine glycan. 2 Peptidase M2 domains span residues 44–627 (TADE…LGWP) and 646–1225 (VSDE…LGWP). The cysteines at positions 161 and 169 are disulfide-linked. Position 235 (Y235) interacts with chloride. An N-linked (GlcNAc...) asparagine glycan is attached at N322. A disulfide bridge connects residues C363 and C381. H394 provides a ligand contact to Zn(2+). E395 functions as the Proton acceptor 1 in the catalytic mechanism. Zn(2+) contacts are provided by H398 and E422. N512 carries an N-linked (GlcNAc...) asparagine glycan. H523 (proton donor 1) is an active-site residue. N-linked (GlcNAc...) asparagine glycosylation occurs at N526. R532 is a chloride binding site. The cysteines at positions 548 and 560 are disulfide-linked. Residues N680, N698, N717, and N763 are each glycosylated (N-linked (GlcNAc...) asparagine). A disulfide bridge links C760 with C766. Residues R794 and Y832 each contribute to the chloride site. The N-linked (GlcNAc...) asparagine glycan is linked to N945. C960 and C978 form a disulfide bridge. Residue H991 coordinates Zn(2+). E992 functions as the Proton acceptor 2 in the catalytic mechanism. Positions 995 and 1019 each coordinate Zn(2+). Chloride is bound by residues W1093 and R1097. The active-site Proton donor 2 is H1121. R1130 contributes to the chloride binding site. Cysteines 1146 and 1158 form a disulfide. 2 N-linked (GlcNAc...) asparagine glycosylation sites follow: N1194 and N1228. The segment at 1218–1259 (HGEKLGWPQYNWTPNSARLEGSFAGTGRVNFLGLNLEEQQAR) is juxtamembrane stalk. The chain crosses the membrane as a helical span at residues 1260–1280 (VGQWVLLFLGVTLLVATMGLT). Topologically, residues 1281–1309 (QRLFSIRHQILRRTHRGPQFGSEVELRHS) are cytoplasmic. S1302 carries the post-translational modification Phosphoserine.

Belongs to the peptidase M2 family. As to quaternary structure, monomer and homodimer; homodimerizes following binding to an inhibitor. Interacts with calmodulin (CALM1, CALM2 or CALM3); interaction takes place in the cytoplasmic region and regulates phosphorylation and proteolytic cleavage. The cofactor is Zn(2+). It depends on chloride as a cofactor. In terms of processing, produced following proteolytic cleavage by secretase enzymes that cleave the transmembrane form in the juxtamembrane stalk region upstream of the transmembrane region. Cleavage can take place at different sites of the juxtamembrane stalk region. Post-translationally, phosphorylated by CK2 on Ser-1302; which allows membrane retention. Phosphorylated on tyrosine residues on its extracellular part, promoting cleavage by secretase enzymes and formation of the soluble form (Angiotensin-converting enzyme, soluble form).

The protein localises to the cell membrane. Its subcellular location is the cytoplasm. The protein resides in the secreted. It catalyses the reaction Release of a C-terminal dipeptide, oligopeptide-|-Xaa-Yaa, when Xaa is not Pro, and Yaa is neither Asp nor Glu. Thus, conversion of angiotensin I to angiotensin II, with increase in vasoconstrictor activity, but no action on angiotensin II.. The enzyme catalyses angiotensin I + H2O = L-histidyl-L-leucine + angiotensin II. It carries out the reaction bradykinin + H2O = L-Phe-L-Arg + bradykinin(1-7). The catalysed reaction is substance P + H2O = substance P(1-9) + L-Leu-L-Met-NH2. It catalyses the reaction substance P + H2O = substance P(1-8) + Gly-L-Leu-L-Met-NH2. The enzyme catalyses substance P + H2O = L-Phe-L-Phe-Gly-L-Leu-L-Met-NH2 + substance P(1-6). It carries out the reaction neurotensin + H2O = neurotensin(1-11) + L-isoleucyl-L-leucine. The catalysed reaction is goralatide + H2O = N-acetyl-L-seryl-L-aspartate + L-lysyl-L-proline. It catalyses the reaction Met-enkephalin + H2O = L-phenylalanyl-L-methionine + L-tyrosylglycylglycine. The enzyme catalyses Leu-enkephalin + H2O = L-tyrosylglycylglycine + L-phenylalanyl-L-leucine. It carries out the reaction Met-enkephalin-Arg-Phe + H2O = L-arginyl-L-phenylalanine + Met-enkephalin. The dipeptidyl carboxypeptidase activity is strongly activated by chloride. The dipeptidyl carboxypeptidase activity is specifically inhibited by lisinopril, captopril and enalaprilat. Functionally, dipeptidyl carboxypeptidase that removes dipeptides from the C-terminus of a variety of circulating hormones, such as angiotensin I, bradykinin or enkephalins, thereby playing a key role in the regulation of blood pressure, electrolyte homeostasis or synaptic plasticity. Composed of two similar catalytic domains, each possessing a functional active site, with different selectivity for substrates. Plays a major role in the angiotensin-renin system that regulates blood pressure and sodium retention by the kidney by converting angiotensin I to angiotensin II, resulting in an increase of the vasoconstrictor activity of angiotensin. Also able to inactivate bradykinin, a potent vasodilator, and therefore enhance the blood pressure response. Acts as a regulator of synaptic transmission by mediating cleavage of neuropeptide hormones, such as substance P, neurotensin or enkephalins. Catalyzes degradation of different enkephalin neuropeptides (Met-enkephalin, Leu-enkephalin, Met-enkephalin-Arg-Phe and possibly Met-enkephalin-Arg-Gly-Leu). Acts as a regulator of synaptic plasticity in the nucleus accumbens of the brain by mediating cleavage of Met-enkephalin-Arg-Phe, a strong ligand of Mu-type opioid receptor OPRM1, into Met-enkephalin. Met-enkephalin-Arg-Phe cleavage by ACE decreases activation of OPRM1, leading to long-term synaptic potentiation of glutamate release. Also acts as a regulator of hematopoietic stem cell differentiation by mediating degradation of hemoregulatory peptide N-acetyl-SDKP (AcSDKP). Acts as a regulator of cannabinoid signaling pathway by mediating degradation of hemopressin, an antagonist peptide of the cannabinoid receptor CNR1. Involved in amyloid-beta metabolism by catalyzing degradation of Amyloid-beta protein 40 and Amyloid-beta protein 42 peptides, thereby preventing plaque formation. Catalyzes cleavage of cholecystokinin (maturation of Cholecystokinin-8 and Cholecystokinin-5) and Gonadoliberin-1 (both maturation and degradation) hormones. Degradation of hemoregulatory peptide N-acetyl-SDKP (AcSDKP) and amyloid-beta proteins is mediated by the N-terminal catalytic domain, while angiotensin I and cholecystokinin cleavage is mediated by the C-terminal catalytic region. In terms of biological role, soluble form that is released in blood plasma and other body fluids following proteolytic cleavage in the juxtamembrane stalk region. This is Angiotensin-converting enzyme from Sus scrofa (Pig).